The primary structure comprises 268 residues: METMKAKELAQKILLDIYRNLDEFSKDIIRGDLADIEFKGFYLKGKNGEKAYIRNLDDFENLKDFDVEMRKYKLKSINLKNLDEGLMIINLSSRVSKEYKFEANEYSIIYPSNNTTIEFKERVLKWMELEDDELDEKIIEFDTKMNEILEELLEDVEVEEEISVYIDVFMDVNKIENFVEKDDERIIIWIHPVFLFSNDDVLRGLLAYELSRFKSRFLEVGYKDIIKYCRELKKLTNKKPKVLEKIKDIANKYGDIDSLNLINEIENE.

The stretch at 132 to 159 (DELDEKIIEFDTKMNEILEELLEDVEVE) forms a coiled coil.

This is an uncharacterized protein from Methanocaldococcus jannaschii (strain ATCC 43067 / DSM 2661 / JAL-1 / JCM 10045 / NBRC 100440) (Methanococcus jannaschii).